Consider the following 252-residue polypeptide: Phosphate import ATP-binding protein PstB 1 (252 aa).

In terms of domain architecture, ABC transporter spans 6–247; the sequence is LQIRDLSVYY…PKRKETEDYI (242 aa). Residue 38-45 coordinates ATP; sequence GPSGSGKS.

This sequence belongs to the ABC transporter superfamily. Phosphate importer (TC 3.A.1.7) family. The complex is composed of two ATP-binding proteins (PstB), two transmembrane proteins (PstC and PstA) and a solute-binding protein (PstS).

The protein localises to the cell membrane. It carries out the reaction phosphate(out) + ATP + H2O = ADP + 2 phosphate(in) + H(+). Part of the ABC transporter complex PstSACB involved in phosphate import. Responsible for energy coupling to the transport system. This Streptococcus pyogenes serotype M6 (strain ATCC BAA-946 / MGAS10394) protein is Phosphate import ATP-binding protein PstB 1.